A 443-amino-acid chain; its full sequence is MREIVHIQGGQCGNQIGAKFWEVISDEHGIDPTGTYHGDSDLQLERINVYYNEATGGRYVPRAILMDLEPGTMDSVRAGPFGQLFRPDNFVFGQTGAGNNWAKGHYTEGAELIDSVLDVVRKEAEGCDCLQGFQITHSLGGGTGSGMGTLLISKVREEYPDRIMETFSVVPSPKVSDTVVEPYNATLSVHQLVENADECMVIDNEALYDICFRTLKLTTPTYGNLNHLVSAAMSGVTCCLRFPGQLNSDLRKLAVNLIPFPRLHFFMIGFAPLTSRGSQQYRALTVPELTQQMFDAKNMMCAADPRHGRYLTASALFRGRMSTKEVDEQMLNVQNKNSSYFVEWIPNNIKSSICDIPPKGLKMAVTFVGNSTAIQEMFKRVAEQFTAMFRRKAFLHWYTGEGMDEMEFTEAESNMNDLVSEYQQYQDATAEEEGEFEEEEGEN.

GTP is bound by residues glutamine 11, glutamate 69, serine 138, glycine 142, threonine 143, glycine 144, asparagine 204, and asparagine 226. A Mg(2+)-binding site is contributed by glutamate 69. A disordered region spans residues 424 to 443; sequence QYQDATAEEEGEFEEEEGEN. Positions 429–443 are enriched in acidic residues; it reads TAEEEGEFEEEEGEN.

Belongs to the tubulin family. In terms of assembly, dimer of alpha and beta chains. A typical microtubule is a hollow water-filled tube with an outer diameter of 25 nm and an inner diameter of 15 nM. Alpha-beta heterodimers associate head-to-tail to form protofilaments running lengthwise along the microtubule wall with the beta-tubulin subunit facing the microtubule plus end conferring a structural polarity. Microtubules usually have 13 protofilaments but different protofilament numbers can be found in some organisms and specialized cells. Mg(2+) is required as a cofactor.

It is found in the cytoplasm. Its subcellular location is the cytoskeleton. Tubulin is the major constituent of microtubules, a cylinder consisting of laterally associated linear protofilaments composed of alpha- and beta-tubulin heterodimers. Microtubules grow by the addition of GTP-tubulin dimers to the microtubule end, where a stabilizing cap forms. Below the cap, tubulin dimers are in GDP-bound state, owing to GTPase activity of alpha-tubulin. In Tetrahymena pyriformis, this protein is Tubulin beta chain (BETA-TT1).